We begin with the raw amino-acid sequence, 710 residues long: Polyribonucleotide nucleotidyltransferase (710 aa).

Residues aspartate 489 and aspartate 495 each contribute to the Mg(2+) site. Residues 556–615 (PKIDTIKIDVDKIKVVIGKGGETIDKIIAETGVKIDIDDEGNVSIYSSDQAAINRTKEII) form the KH domain. Residues 625–693 (GEVYHAKVVR…EKGRVDASMK (69 aa)) form the S1 motif domain. Positions 691 to 710 (SMKALIPRPPKPEKKEEKHD) are disordered. Over residues 700-710 (PKPEKKEEKHD) the composition is skewed to basic and acidic residues.

Mg(2+) serves as cofactor.

The protein resides in the cytoplasm. It carries out the reaction RNA(n+1) + phosphate = RNA(n) + a ribonucleoside 5'-diphosphate. Its function is as follows. Involved in mRNA degradation. Catalyzes the phosphorolysis of single-stranded polyribonucleotides processively in the 3'- to 5'-direction. This chain is Polyribonucleotide nucleotidyltransferase, found in Streptococcus pyogenes serotype M6 (strain ATCC BAA-946 / MGAS10394).